We begin with the raw amino-acid sequence, 629 residues long: tRNA uridine 5-carboxymethylaminomethyl modification enzyme MnmG (629 aa).

FAD is bound by residues 13–18, Val125, and Ser180; that span reads GGGHAG. Residue 273–287 participates in NAD(+) binding; sequence GPRYCPSIEDKVMRF. Position 370 (Gln370) interacts with FAD.

This sequence belongs to the MnmG family. In terms of assembly, homodimer. Heterotetramer of two MnmE and two MnmG subunits. It depends on FAD as a cofactor.

It localises to the cytoplasm. Functionally, NAD-binding protein involved in the addition of a carboxymethylaminomethyl (cmnm) group at the wobble position (U34) of certain tRNAs, forming tRNA-cmnm(5)s(2)U34. The protein is tRNA uridine 5-carboxymethylaminomethyl modification enzyme MnmG of Psychromonas ingrahamii (strain DSM 17664 / CCUG 51855 / 37).